The chain runs to 405 residues: Putative polysaccharide ligase RT0347 (405 aa).

The next 10 helical transmembrane spans lie at 23–43 (IAAT…ISFI), 77–97 (LFIA…NSLV), 120–140 (ILYL…LFFI), 156–178 (FGLY…VIII), 201–221 (ISDS…FILA), 227–247 (IFFK…PIIA), 270–290 (LFIW…GYGF), 322–342 (ILQI…CLVY), 353–375 (ISNF…MISY), and 377–397 (IWQT…KLLV).

This sequence belongs to the O-antigen ligase family.

It is found in the membrane. The protein is Putative polysaccharide ligase RT0347 of Rickettsia typhi (strain ATCC VR-144 / Wilmington).